A 612-amino-acid chain; its full sequence is tRNA uridine 5-carboxymethylaminomethyl modification enzyme MnmG (612 aa).

Residue 9-14 coordinates FAD; that stretch reads GAGHAG. 270–284 provides a ligand contact to NAD(+); it reads GPLYCPSIEDKVFKF.

The protein belongs to the MnmG family. Homodimer. Heterotetramer of two MnmE and two MnmG subunits. FAD serves as cofactor.

It localises to the cytoplasm. Functionally, NAD-binding protein involved in the addition of a carboxymethylaminomethyl (cmnm) group at the wobble position (U34) of certain tRNAs, forming tRNA-cmnm(5)s(2)U34. This is tRNA uridine 5-carboxymethylaminomethyl modification enzyme MnmG from Mycoplasma genitalium (strain ATCC 33530 / DSM 19775 / NCTC 10195 / G37) (Mycoplasmoides genitalium).